The sequence spans 889 residues: DNA mismatch repair protein MutS (889 aa).

620–627 (GPNMAGKS) contributes to the ATP binding site. Positions 812–831 (AAAPSGAARRGRPAREKEPG) are disordered.

The protein belongs to the DNA mismatch repair MutS family.

Functionally, this protein is involved in the repair of mismatches in DNA. It is possible that it carries out the mismatch recognition step. This protein has a weak ATPase activity. The chain is DNA mismatch repair protein MutS from Syntrophobacter fumaroxidans (strain DSM 10017 / MPOB).